Reading from the N-terminus, the 184-residue chain is Ribosome-recycling factor (184 aa).

The protein belongs to the RRF family.

The protein localises to the cytoplasm. In terms of biological role, responsible for the release of ribosomes from messenger RNA at the termination of protein biosynthesis. May increase the efficiency of translation by recycling ribosomes from one round of translation to another. This chain is Ribosome-recycling factor, found in Borreliella afzelii (strain PKo) (Borrelia afzelii).